The chain runs to 129 residues: Follitropin subunit beta (129 aa).

Positions 1–20 (MKTAQFYIFFFCWKAIWCNG) are cleaved as a signal peptide. 6 cysteine pairs are disulfide-bonded: Cys-21–Cys-69, Cys-35–Cys-84, Cys-38–Cys-122, Cys-46–Cys-100, Cys-50–Cys-102, and Cys-105–Cys-112. N-linked (GlcNAc...) asparagine glycosylation is found at Asn-25 and Asn-42.

Belongs to the glycoprotein hormones subunit beta family. In terms of assembly, heterodimer. The active follitropin is a heterodimer composed of an alpha chain/CGA shared with other hormones and a unique beta chain/FSHB shown here.

Its subcellular location is the secreted. Functionally, together with the alpha chain CGA constitutes follitropin, the follicle-stimulating hormone, and provides its biological specificity to the hormone heterodimer. Binds FSHR, a G protein-coupled receptor, on target cells to activate downstream signaling pathways. Follitropin is involved in follicle development and spermatogenesis in reproductive organs. The chain is Follitropin subunit beta (FSHB) from Monodelphis domestica (Gray short-tailed opossum).